The sequence spans 1036 residues: DNA-directed RNA polymerase subunit beta (1036 aa).

It belongs to the RNA polymerase beta chain family. As to quaternary structure, in plastids the minimal PEP RNA polymerase catalytic core is composed of four subunits: alpha, beta, beta', and beta''. When a (nuclear-encoded) sigma factor is associated with the core the holoenzyme is formed, which can initiate transcription.

Its subcellular location is the plastid. The protein resides in the chloroplast. The catalysed reaction is RNA(n) + a ribonucleoside 5'-triphosphate = RNA(n+1) + diphosphate. Functionally, DNA-dependent RNA polymerase catalyzes the transcription of DNA into RNA using the four ribonucleoside triphosphates as substrates. This is DNA-directed RNA polymerase subunit beta from Cyanidioschyzon merolae (strain NIES-3377 / 10D) (Unicellular red alga).